Reading from the N-terminus, the 745-residue chain is Pentatricopeptide repeat-containing protein At1g71420 (745 aa).

PPR repeat units follow at residues 58–88, 95–125, 126–160, 191–224, 225–259, 260–296, 301–332, 334–367, 368–402, 403–437, 438–464, 466–496, and 502–532; these read SQQA…MLSH, NVIL…MPER, NVVS…CFPN, SIYV…IKFK, NLVT…GVGF, DRAT…TVKS, QTEV…MSHC, DIVA…KLSP, DWYT…GFLA, DTVL…DVVS, WNSM…MDIN, DSAT…MFEK, and QLNH…MPMD. Positions 537-613 are type E motif; the sequence is VWIALLGSCR…EPDLSWTEIG (77 aa). Positions 614–644 are type E(+) motif; it reads NKVHEFASGGRHRPDKEAVYRELKRLISWLK. Positions 645–745 are type DYW motif; sequence EMGYVPEMRS…DSSCSCNDYW (101 aa).

It belongs to the PPR family. PCMP-H subfamily.

This Arabidopsis thaliana (Mouse-ear cress) protein is Pentatricopeptide repeat-containing protein At1g71420 (PCMP-H70).